Here is a 367-residue protein sequence, read N- to C-terminus: Peptide chain release factor 2 (367 aa).

Gln250 bears the N5-methylglutamine mark.

It belongs to the prokaryotic/mitochondrial release factor family. In terms of processing, methylated by PrmC. Methylation increases the termination efficiency of RF2.

It localises to the cytoplasm. Functionally, peptide chain release factor 2 directs the termination of translation in response to the peptide chain termination codons UGA and UAA. This is Peptide chain release factor 2 from Chloroflexus aggregans (strain MD-66 / DSM 9485).